Here is a 76-residue protein sequence, read N- to C-terminus: Endothelin-1 (76 aa).

Positions 30–44 (CQCASQKDKKCWNFC) are endothelin-like.

It belongs to the endothelin/sarafotoxin family.

The protein localises to the secreted. In terms of biological role, endothelins are endothelium-derived vasoconstrictor peptides. Probable ligand for G-protein coupled receptors EDNRA and EDNRB which activates PTK2B, BCAR1, BCAR3 and, GTPases RAP1 and RHOA cascade in glomerular mesangial cells. Also binds the DEAR/FBXW7-AS1 receptor. Promotes mesenteric arterial wall remodeling via activation of ROCK signaling and subsequent colocalization of NFATC3 with F-actin filaments. NFATC3 then translocates to the nucleus where it subsequently promotes the transcription of the smooth muscle hypertrophy and differentiation marker ACTA2. In Macaca fascicularis (Crab-eating macaque), this protein is Endothelin-1 (EDN1).